The primary structure comprises 110 residues: MIPGEYQLKSGDIELCVGRKSITINVANKGDRPVQVGSHYHFAESNPALSFDREQAYGYRLAIAAGLAIRFEPGQTREVSLIPYSGLRRLYGFRGEVMGPLDNKPKQESV.

Belongs to the urease beta subunit family. Heterotrimer of UreA (gamma), UreB (beta) and UreC (alpha) subunits. Three heterotrimers associate to form the active enzyme.

It is found in the cytoplasm. The enzyme catalyses urea + 2 H2O + H(+) = hydrogencarbonate + 2 NH4(+). The protein operates within nitrogen metabolism; urea degradation; CO(2) and NH(3) from urea (urease route): step 1/1. This is Urease subunit beta from Pseudoalteromonas translucida (strain TAC 125).